Reading from the N-terminus, the 262-residue chain is Acyl-[acyl-carrier-protein]--UDP-N-acetylglucosamine O-acyltransferase (262 aa).

This sequence belongs to the transferase hexapeptide repeat family. LpxA subfamily. As to quaternary structure, homotrimer.

The protein resides in the cytoplasm. The enzyme catalyses a (3R)-hydroxyacyl-[ACP] + UDP-N-acetyl-alpha-D-glucosamine = a UDP-3-O-[(3R)-3-hydroxyacyl]-N-acetyl-alpha-D-glucosamine + holo-[ACP]. It participates in glycolipid biosynthesis; lipid IV(A) biosynthesis; lipid IV(A) from (3R)-3-hydroxytetradecanoyl-[acyl-carrier-protein] and UDP-N-acetyl-alpha-D-glucosamine: step 1/6. Involved in the biosynthesis of lipid A, a phosphorylated glycolipid that anchors the lipopolysaccharide to the outer membrane of the cell. This chain is Acyl-[acyl-carrier-protein]--UDP-N-acetylglucosamine O-acyltransferase, found in Verminephrobacter eiseniae (strain EF01-2).